The primary structure comprises 306 residues: Glutathione transport system permease protein GsiC (306 aa).

The Cytoplasmic portion of the chain corresponds to 1–8 (MLNYVIKR). Residues 9 to 29 (LLGLIPTLFIVSVLVFLFVHM) traverse the membrane as a helical segment. Residues 30–102 (LPGDPARLIA…SRFMPTLWLT (73 aa)) lie on the Periplasmic side of the membrane. Residues 95-292 (FMPTLWLTIT…LEFILINLVV (198 aa)) form the ABC transmembrane type-1 domain. A helical membrane pass occupies residues 103 to 123 (ITSMVWAVIFGMAAGIIAAVW). Topologically, residues 124 to 134 (RNRWPDRLSMT) are cytoplasmic. A helical membrane pass occupies residues 135-155 (IAVSGISFPAFALGMFLIQVF). The Periplasmic segment spans residues 156–168 (SVELGWLPTVGAD). Residues 169 to 189 (SWQHYILPSLTLGAAVAAVMA) traverse the membrane as a helical segment. At 190-228 (RFTRASFVDVLSEDYMRTARAKGVSETWVVLKHGLRNAM) the chain is on the cytoplasmic side. Residues 229–249 (IPVVTMMGLQFGFLLGGSIVV) form a helical membrane-spanning segment. The Periplasmic portion of the chain corresponds to 250 to 277 (EKVFNWPGLGRLLVDSVEMRDYPVIQAE). Residues 278-298 (ILLFSLEFILINLVVDVLYAA) traverse the membrane as a helical segment. Topologically, residues 299 to 306 (INPAIRYK) are cytoplasmic.

This sequence belongs to the binding-protein-dependent transport system permease family. The complex is composed of two ATP-binding proteins (GsiA), two transmembrane proteins (GsiC and GsiD) and a solute-binding protein (GsiB).

The protein resides in the cell inner membrane. Functionally, part of the ABC transporter complex GsiABCD involved in glutathione import. Probably responsible for the translocation of the substrate across the membrane. The chain is Glutathione transport system permease protein GsiC from Shigella flexneri serotype 5b (strain 8401).